We begin with the raw amino-acid sequence, 500 residues long: Probable malate:quinone oxidoreductase (500 aa).

The protein belongs to the MQO family. The cofactor is FAD.

It carries out the reaction (S)-malate + a quinone = a quinol + oxaloacetate. It functions in the pathway carbohydrate metabolism; tricarboxylic acid cycle; oxaloacetate from (S)-malate (quinone route): step 1/1. The polypeptide is Probable malate:quinone oxidoreductase (Bacillus anthracis (strain A0248)).